The primary structure comprises 323 residues: MPVHSRGDKKETNHHDEMEVDYAENEGSSSEDEDTESSSVSEDGDSSEMDDEDCERRRMECLDEMSNLEKQFTDLKDQLYKERLSQVDAKLQEVIAGKAPEYLEPLATLQENMQIRTKVAGIYRELCLESVKNKYECEIQASRQHCESEKLLLYDTVQSELEEKIRRLEEDRHSIDITSELWNDELQSRKKRKDPFSPDKKKPVVVSGPYIVYMLQDLDILEDWTTIRKAMATLGPHRVKTEPPVKLEKHLHSARSEEGRLYYDGEWYIRGQTICIDKKDECPTSAVITTINHDEVWFKRPDGSKSKLYISQLQKGKYSIKHS.

Basic and acidic residues predominate over residues 1–17 (MPVHSRGDKKETNHHDE). The segment at 1-56 (MPVHSRGDKKETNHHDEMEVDYAENEGSSSEDEDTESSSVSEDGDSSEMDDEDCER) is disordered. Positions 18 to 53 (MEVDYAENEGSSSEDEDTESSSVSEDGDSSEMDDED) are enriched in acidic residues. Coiled coils occupy residues 52-84 (EDCERRRMECLDEMSNLEKQFTDLKDQLYKERL) and 149-180 (EKLLLYDTVQSELEEKIRRLEEDRHSIDITSE). The residue at position 197 (Ser-197) is a Phosphoserine. Residues Lys-240 and Lys-246 each participate in a glycyl lysine isopeptide (Lys-Gly) (interchain with G-Cter in SUMO2) cross-link.

This sequence belongs to the BRMS1 family. As to quaternary structure, component of the Sin3/HDAC1 corepressor complex at least composed of BRMS1, BRMS1L and ING2/ING1L. Interacts with HDAC and SIN3A.

It is found in the nucleus. In terms of biological role, involved in the histone deacetylase (HDAC1)-dependent transcriptional repression activity. When overexpressed in lung cancer cell line that lacks p53/TP53 expression, inhibits cell growth. The chain is Breast cancer metastasis-suppressor 1-like protein (BRMS1L) from Bos taurus (Bovine).